Here is a 469-residue protein sequence, read N- to C-terminus: Uronate isomerase (469 aa).

Belongs to the metallo-dependent hydrolases superfamily. Uronate isomerase family.

It catalyses the reaction D-glucuronate = D-fructuronate. The catalysed reaction is aldehydo-D-galacturonate = keto-D-tagaturonate. It functions in the pathway carbohydrate metabolism; pentose and glucuronate interconversion. The polypeptide is Uronate isomerase (Rhizobium meliloti (strain 1021) (Ensifer meliloti)).